Here is a 215-residue protein sequence, read N- to C-terminus: Cytochrome b6 (215 aa).

Residues 32–52 form a helical membrane-spanning segment; that stretch reads IFYCLGGITLTCFLVQVATGF. Cysteine 35 contributes to the heme c binding site. Heme b is bound by residues histidine 86 and histidine 100. Transmembrane regions (helical) follow at residues 90-110, 116-136, and 186-206; these read ASMMVLMMILHVFRVYLTGGF, LTWVTGVILAVLTVSFGVTGY, and LHTFVLPLLTAVFMLMHFLMI. Histidine 187 and histidine 202 together coordinate heme b.

The protein belongs to the cytochrome b family. PetB subfamily. The 4 large subunits of the cytochrome b6-f complex are cytochrome b6, subunit IV (17 kDa polypeptide, PetD), cytochrome f and the Rieske protein, while the 4 small subunits are PetG, PetL, PetM and PetN. The complex functions as a dimer. The cofactor is heme b. Requires heme c as cofactor.

The protein resides in the plastid. Its subcellular location is the chloroplast thylakoid membrane. Its function is as follows. Component of the cytochrome b6-f complex, which mediates electron transfer between photosystem II (PSII) and photosystem I (PSI), cyclic electron flow around PSI, and state transitions. The sequence is that of Cytochrome b6 from Klebsormidium bilatum (Filamentous green alga).